A 231-amino-acid polypeptide reads, in one-letter code: MNEITTWRHVFKLDPNKEITDEQLEQVCESGTDAIIVGGTDGVTLENVIDLLARVRRFSVPCALEVSDIEAITPGFDYYFIPMVLNSRDLTWLIDLHHEAVKQFGDLINWEELFVEGYCILNDECKAASLTSARTNVTEEDVIAYARMAEHMYHFPIFYMEYSGRYGDVALVEKVKRTLERTRLFYGGGIHTPEQAKEMAMWADTVVVGNAIYTNLQMALQTVEAVKGKSA.

Residue Lys-12 coordinates sn-glycerol 1-phosphate. Mg(2+)-binding residues include Asp-14 and Thr-40. Sn-glycerol 1-phosphate is bound by residues 159–164, Gly-189, and 209–210; these read YMEYSG and GN.

This sequence belongs to the GGGP/HepGP synthase family. Group I subfamily. Homodimer. The cofactor is Mg(2+).

It carries out the reaction sn-glycerol 1-phosphate + all-trans-heptaprenyl diphosphate = 3-heptaprenyl-sn-glycero-1-phosphate + diphosphate. It functions in the pathway membrane lipid metabolism; glycerophospholipid metabolism. Prenyltransferase that catalyzes in vivo the transfer of the heptaprenyl moiety of heptaprenyl pyrophosphate (HepPP; 35 carbon atoms) to the C3 hydroxyl of sn-glycerol-1-phosphate (G1P), producing heptaprenylglyceryl phosphate (HepGP). This reaction is an ether-bond-formation step in the biosynthesis of archaea-type G1P-based membrane lipids found in Bacillales. This Anoxybacillus flavithermus (strain DSM 21510 / WK1) protein is Heptaprenylglyceryl phosphate synthase.